The chain runs to 212 residues: Ferric nitrobindin-like protein (212 aa).

Basic and acidic residues predominate over residues 1 to 11; that stretch reads MTSSDQPERGS. The tract at residues 1–36 is disordered; it reads MTSSDQPERGSGDAAVQAAAERAEQTRGRNVPQFDD. Residues 64-70 carry the GXWXGXG motif; the sequence is GVWRGDG.

The protein belongs to the nitrobindin family.

The sequence is that of Ferric nitrobindin-like protein from Saccharopolyspora erythraea (strain ATCC 11635 / DSM 40517 / JCM 4748 / NBRC 13426 / NCIMB 8594 / NRRL 2338).